We begin with the raw amino-acid sequence, 108 residues long: Small ribosomal subunit protein eS25 (108 aa).

The disordered stretch occupies residues 1-36; it reads MAPKKAQAPPPSSKPAKSGGGKQKKKKWSKGKQKEK. Positions 22–31 are enriched in basic residues; the sequence is KQKKKKWSKG.

The protein belongs to the eukaryotic ribosomal protein eS25 family.

The polypeptide is Small ribosomal subunit protein eS25 (RPS25) (Solanum lycopersicum (Tomato)).